The primary structure comprises 725 residues: Polyribonucleotide nucleotidyltransferase (725 aa).

Mg(2+) is bound by residues Asp-487 and Asp-493. The 60-residue stretch at 554 to 613 folds into the KH domain; sequence PRIETMQIPTDKIREVIGTGGKVIREIVEKTGAKIDIQDTGVIKIASSDAKAIKAAYNWI. One can recognise an S1 motif domain in the interval 623–691; sequence GMIYDGTVVK…ERGKIRLSMK (69 aa). The interval 697–725 is disordered; sequence TGEDITEKLKAEREADRNRERQARQSAGE. Basic and acidic residues predominate over residues 701–719; it reads ITEKLKAEREADRNRERQA.

It belongs to the polyribonucleotide nucleotidyltransferase family. The cofactor is Mg(2+).

It is found in the cytoplasm. The catalysed reaction is RNA(n+1) + phosphate = RNA(n) + a ribonucleoside 5'-diphosphate. Its function is as follows. Involved in mRNA degradation. Catalyzes the phosphorolysis of single-stranded polyribonucleotides processively in the 3'- to 5'-direction. The chain is Polyribonucleotide nucleotidyltransferase from Methylobacterium nodulans (strain LMG 21967 / CNCM I-2342 / ORS 2060).